We begin with the raw amino-acid sequence, 515 residues long: Nectin-1 (515 aa).

An N-terminal signal peptide occupies residues 1–30 (MARMGLAGAAGRWWGLALGLTAFFLPGAHT). An Ig-like V-type domain is found at 31–141 (QVVQVNDSMY…GNRESQLNLT (111 aa)). Residues 31–355 (QVVQVNDSMY…GRRAGQVPTA (325 aa)) are Extracellular-facing. Residues Asn-36, Asn-72, Asn-139, Asn-202, Asn-286, Asn-297, Asn-307, and Asn-332 are each glycosylated (N-linked (GlcNAc...) asparagine). Residues Cys-51 and Cys-124 are joined by a disulfide bond. 2 Ig-like C2-type domains span residues 145-243 (KPTN…TLNV) and 247-334 (PEVT…VNIT). 2 disulfides stabilise this stretch: Cys-172/Cys-226 and Cys-269/Cys-316. The segment at 282 to 299 (WTTLNGSLPKGVEAQNRT) is interaction with FGFR. A helical membrane pass occupies residues 356–376 (IIGGVVGSILLVLFVVGGIVV). Topologically, residues 377–515 (ALCRRRHTFK…SFISKKEWYV (139 aa)) are cytoplasmic. A disordered region spans residues 400–486 (YSKAGIPQHH…DGYGDRTLGY (87 aa)). A phosphoserine mark is found at Ser-422, Ser-434, and Ser-435. A Phosphotyrosine modification is found at Tyr-436. Residues 436–445 (YEEEEEEEGG) are compositionally biased toward acidic residues. Basic and acidic residues predominate over residues 446–464 (GGERKVGGPHPKYDEDAKR). Phosphoserine is present on Ser-509.

This sequence belongs to the nectin family. In terms of assembly, (Microbial infection) Interacts with herpes pseudorabies virus/PRV envelope glycoprotein D.

It is found in the cell membrane. The protein localises to the cell junction. It localises to the adherens junction. The protein resides in the presynaptic cell membrane. Functionally, (Microbial infection) Acts as a receptor for herpes simplex virus 1/HHV-1, herpes simplex virus 2/HHV-2, and pseudorabies virus/PRV. In Sus scrofa (Pig), this protein is Nectin-1.